A 340-amino-acid polypeptide reads, in one-letter code: GTP 3',8-cyclase (340 aa).

The Radical SAM core domain occupies 8 to 227; it reads KLGRPIRDLR…TMIEQHFEID (220 aa). R17 contacts GTP. [4Fe-4S] cluster is bound by residues C24 and C28. Y30 serves as a coordination point for S-adenosyl-L-methionine. Residue C31 coordinates [4Fe-4S] cluster. R71 serves as a coordination point for GTP. Residue G75 coordinates S-adenosyl-L-methionine. T102 contributes to the GTP binding site. S-adenosyl-L-methionine is bound at residue S126. GTP is bound at residue K163. M197 is a binding site for S-adenosyl-L-methionine. 2 residues coordinate [4Fe-4S] cluster: C261 and C264. 266–268 contacts GTP; that stretch reads RAR. C278 lines the [4Fe-4S] cluster pocket.

Belongs to the radical SAM superfamily. MoaA family. As to quaternary structure, monomer and homodimer. It depends on [4Fe-4S] cluster as a cofactor.

It carries out the reaction GTP + AH2 + S-adenosyl-L-methionine = (8S)-3',8-cyclo-7,8-dihydroguanosine 5'-triphosphate + 5'-deoxyadenosine + L-methionine + A + H(+). Its pathway is cofactor biosynthesis; molybdopterin biosynthesis. In terms of biological role, catalyzes the cyclization of GTP to (8S)-3',8-cyclo-7,8-dihydroguanosine 5'-triphosphate. The polypeptide is GTP 3',8-cyclase (Staphylococcus aureus (strain MRSA252)).